Reading from the N-terminus, the 256-residue chain is MGASEELEYLKSLVSQLNGKIAAIEAKAKGSPSPTPAQQLRTILIGPPGAGKGTQAPKIRDEFCVCHLATGDMLREQVQQKTPLGIEAKKIMDAGGLVSDDIMVGIIKDQLENNKSCKNGFVLDGFPRTIPQAQKLDGMLAERKEKIDSVVQLLIDDQLLISRITGRLVHPASGRSYHKEFNPPKKRNVDDVTGEPLIQRSDDNVETLTKRLRTFHSQTGPVVDYYKVKGLWHGIDAAQSPSVVWENLRSIFVSKK.

An ATP-binding site is contributed by 49–54 (GAGKGT). The NMP stretch occupies residues 69-98 (ATGDMLREQVQQKTPLGIEAKKIMDAGGLV). Residues Thr-70, Arg-75, 96-98 (GLV), 125-128 (GFPR), and Gln-132 each bind AMP. Positions 166-203 (GRLVHPASGRSYHKEFNPPKKRNVDDVTGEPLIQRSDD) are LID. ATP contacts are provided by residues Arg-167 and 176–177 (SY). AMP-binding residues include Arg-200 and Arg-211. Gln-239 serves as a coordination point for ATP.

The protein belongs to the adenylate kinase family. AK2 subfamily. In terms of assembly, monomer.

Its subcellular location is the cytoplasm. It is found in the cytosol. It localises to the mitochondrion intermembrane space. It carries out the reaction AMP + ATP = 2 ADP. Its function is as follows. Catalyzes the reversible transfer of the terminal phosphate group between ATP and AMP. Plays an important role in cellular energy homeostasis and in adenine nucleotide metabolism. Adenylate kinase activity is critical for regulation of the phosphate utilization and the AMP de novo biosynthesis pathways. The chain is Adenylate kinase from Laccaria bicolor (strain S238N-H82 / ATCC MYA-4686) (Bicoloured deceiver).